We begin with the raw amino-acid sequence, 501 residues long: Glycoprotein 3-alpha-L-fucosyltransferase A (501 aa).

Residues 1 to 39 (MGVFSNLRGPKIGLTHEELPVVANGSTSSSSSPSSFKRK) are Cytoplasmic-facing. The chain crosses the membrane as a helical; Signal-anchor for type II membrane protein span at residues 40-60 (VSTFLPICVALVVIIEIGFLC). The Lumenal portion of the chain corresponds to 61-501 (RLDNASLVDT…PCPKFEVVFV (441 aa)). N-linked (GlcNAc...) asparagine glycans are attached at residues Asn-64, Asn-337, Asn-420, and Asn-481.

This sequence belongs to the glycosyltransferase 10 family. It depends on Mg(2+) as a cofactor. Requires Mn(2+) as cofactor. Post-translationally, glycosylation may be important for enzymatic activity.

The protein localises to the golgi apparatus. The protein resides in the golgi stack membrane. It carries out the reaction N(4)-{beta-D-GlcNAc-(1-&gt;2)-alpha-D-Man-(1-&gt;3)-[beta-D-GlcNAc-(1-&gt;2)-alpha-D-Man-(1-&gt;6)]-beta-D-Man-(1-&gt;4)-beta-D-GlcNAc-(1-&gt;4)-beta-D-GlcNAc}-L-asparaginyl-[protein] + GDP-beta-L-fucose = N(4)-{beta-D-GlcNAc-(1-&gt;2)-alpha-D-Man-(1-&gt;3)-[beta-D-GlcNAc-(1-&gt;2)-alpha-D-Man-(1-&gt;6)]-beta-D-Man-(1-&gt;4)-beta-D-GlcNAc-(1-&gt;4)-[alpha-L-Fuc(1-&gt;3)]-beta-D-GlcNAc}-L-asparaginyl-[protein] + GDP + H(+). It participates in protein modification; protein glycosylation. With respect to regulation, inhibited by Cu(2+) and Zn(2+). Involved in cell wall synthesis. Preferentially catalyzes the addition of fucose in alpha 1-3 linkage to the first GlcNAc residue next to the peptide chains in N-glycans. The protein is Glycoprotein 3-alpha-L-fucosyltransferase A (FUT11) of Arabidopsis thaliana (Mouse-ear cress).